A 230-amino-acid chain; its full sequence is Somatolactin (230 aa).

The N-terminal stretch at 1–23 is a signal peptide; that stretch reads MMTAVKQSGVWAVLLWPYLLAVS. 3 disulfides stabilise this stretch: Cys-28-Cys-38, Cys-88-Cys-204, and Cys-221-Cys-229. Residues Asn-34 and Asn-144 are each glycosylated (N-linked (GlcNAc...) asparagine).

It belongs to the somatotropin/prolactin family. Pituitary gland.

It localises to the secreted. In Solea senegalensis (Senegalese sole), this protein is Somatolactin.